The following is a 1309-amino-acid chain: Mediator of RNA polymerase II transcription subunit 33A (1309 aa).

The segment at 809 to 829 (QTLNPVNSGTSSSSGAASEDS) is disordered. Low complexity predominate over residues 816–826 (SGTSSSSGAAS).

It belongs to the Mediator complex subunit 33 family. Component of the Mediator complex.

Its subcellular location is the nucleus. In terms of biological role, component of the Mediator complex, a coactivator involved in the regulated transcription of nearly all RNA polymerase II-dependent genes. Mediator functions as a bridge to convey information from gene-specific regulatory proteins to the basal RNA polymerase II transcription machinery. The Mediator complex, having a compact conformation in its free form, is recruited to promoters by direct interactions with regulatory proteins and serves for the assembly of a functional preinitiation complex with RNA polymerase II and the general transcription factors. Involved in the repression of phenylpropanoid biosynthesis. May compete with MED33B for common binding partners or for occupancy in Mediator. This Arabidopsis thaliana (Mouse-ear cress) protein is Mediator of RNA polymerase II transcription subunit 33A (MED33A).